Here is a 277-residue protein sequence, read N- to C-terminus: Thymidylate synthase (277 aa).

DUMP is bound at residue Arg21. His51 contributes to the (6R)-5,10-methylene-5,6,7,8-tetrahydrofolate binding site. A dUMP-binding site is contributed by Arg139–Arg140. Cys159 acts as the Nucleophile in catalysis. DUMP is bound by residues Arg179–Asp182, Asn190, and His220–Tyr222. Asp182 serves as a coordination point for (6R)-5,10-methylene-5,6,7,8-tetrahydrofolate. (6R)-5,10-methylene-5,6,7,8-tetrahydrofolate is bound at residue Ala276.

This sequence belongs to the thymidylate synthase family. Bacterial-type ThyA subfamily. Homodimer.

The protein resides in the cytoplasm. The catalysed reaction is dUMP + (6R)-5,10-methylene-5,6,7,8-tetrahydrofolate = 7,8-dihydrofolate + dTMP. The protein operates within pyrimidine metabolism; dTTP biosynthesis. Catalyzes the reductive methylation of 2'-deoxyuridine-5'-monophosphate (dUMP) to 2'-deoxythymidine-5'-monophosphate (dTMP) while utilizing 5,10-methylenetetrahydrofolate (mTHF) as the methyl donor and reductant in the reaction, yielding dihydrofolate (DHF) as a by-product. This enzymatic reaction provides an intracellular de novo source of dTMP, an essential precursor for DNA biosynthesis. This chain is Thymidylate synthase, found in Ruegeria sp. (strain TM1040) (Silicibacter sp.).